Reading from the N-terminus, the 212-residue chain is ATP phosphoribosyltransferase (212 aa).

Belongs to the ATP phosphoribosyltransferase family. Short subfamily. Heteromultimer composed of HisG and HisZ subunits.

The protein localises to the cytoplasm. The catalysed reaction is 1-(5-phospho-beta-D-ribosyl)-ATP + diphosphate = 5-phospho-alpha-D-ribose 1-diphosphate + ATP. The protein operates within amino-acid biosynthesis; L-histidine biosynthesis; L-histidine from 5-phospho-alpha-D-ribose 1-diphosphate: step 1/9. Its function is as follows. Catalyzes the condensation of ATP and 5-phosphoribose 1-diphosphate to form N'-(5'-phosphoribosyl)-ATP (PR-ATP). Has a crucial role in the pathway because the rate of histidine biosynthesis seems to be controlled primarily by regulation of HisG enzymatic activity. This Prochlorococcus marinus (strain AS9601) protein is ATP phosphoribosyltransferase.